Consider the following 159-residue polypeptide: Phosphopantetheine adenylyltransferase (159 aa).

It belongs to the eukaryotic CoaD family.

Its subcellular location is the cytoplasm. The catalysed reaction is (R)-4'-phosphopantetheine + ATP + H(+) = 3'-dephospho-CoA + diphosphate. The protein operates within cofactor biosynthesis; coenzyme A biosynthesis. Reversibly transfers an adenylyl group from ATP to 4'-phosphopantetheine, yielding dephospho-CoA (dPCoA) and pyrophosphate. The sequence is that of Phosphopantetheine adenylyltransferase from Thermococcus gammatolerans (strain DSM 15229 / JCM 11827 / EJ3).